The sequence spans 926 residues: Serine/threonine-protein kinase/endoribonuclease IRE2 (926 aa).

Residues 1–34 (MASAVRGSRPWPRLGLQLQFAALLLGTLSPQVHT) form the signal peptide. The Lumenal segment spans residues 35-430 (LRPENLLLVS…TPDSYLGLGP (396 aa)). The helical transmembrane segment at 431–451 (QDLLAASLTAVLLGGWILFVM) threads the bilayer. Over 452–926 (RQQQPQVVEK…RRPCPGATGR (475 aa)) the chain is Cytoplasmic. Residues 478–501 (DAQSLHSGASRRSQKRLQSPSKQA) are compositionally biased toward polar residues. The tract at residues 478 to 509 (DAQSLHSGASRRSQKRLQSPSKQAQPLDDPEA) is disordered. The Protein kinase domain maps to 520–781 (FNPKDVLGRG…APQVLAHPFF (262 aa)). Residues 526-534 (LGRGAGGTF) and Lys-548 contribute to the ATP site. The Proton acceptor role is filled by Asp-637. The 129-residue stretch at 784–912 (RAKQLQFFQD…ESLFLPYYPP (129 aa)) folds into the KEN domain.

Belongs to the protein kinase superfamily. Ser/Thr protein kinase family. Mg(2+) is required as a cofactor. Autophosphorylated.

It localises to the endoplasmic reticulum membrane. The catalysed reaction is L-seryl-[protein] + ATP = O-phospho-L-seryl-[protein] + ADP + H(+). It carries out the reaction L-threonyl-[protein] + ATP = O-phospho-L-threonyl-[protein] + ADP + H(+). Its activity is regulated as follows. The kinase domain is activated by trans-autophosphorylation. Kinase activity is required for activation of the endoribonuclease domain. Its function is as follows. Induces translational repression through 28S ribosomal RNA cleavage in response to ER stress. Pro-apoptotic. Appears to play no role in the unfolded-protein response, unlike closely related proteins. The chain is Serine/threonine-protein kinase/endoribonuclease IRE2 from Homo sapiens (Human).